The following is an 81-amino-acid chain: YIVMISLALVVMIGVESVRDGYIVYPNNCVYHCIPACDGLCKKNGGTSGSCSFLIGSGIACWCKDLPDNVPIKDPSQKCTR.

The N-terminal stretch at 1–17 is a signal peptide; it reads YIVMISLALVVMIGVES. An LCN-type CS-alpha/beta domain is found at 19–80; it reads RDGYIVYPNN…PIKDPSQKCT (62 aa). 4 disulfide bridges follow: Cys29/Cys79, Cys33/Cys51, Cys37/Cys61, and Cys41/Cys63.

The protein belongs to the long (4 C-C) scorpion toxin superfamily. Sodium channel inhibitor family. Alpha subfamily. As to expression, expressed by the venom gland.

The protein localises to the secreted. Alpha toxins bind voltage-independently at site-3 of sodium channels (Nav) and inhibit the inactivation of the activated channels, thereby blocking neuronal transmission. The sequence is that of Alpha-toxin Ac1 from Androctonus crassicauda (Arabian fat-tailed scorpion).